A 213-amino-acid polypeptide reads, in one-letter code: Peptidyl-tRNA hydrolase (213 aa).

A tRNA-binding site is contributed by tyrosine 15. The active-site Proton acceptor is the histidine 20. TRNA contacts are provided by phenylalanine 66, asparagine 68, and asparagine 114. A disordered region spans residues 187–213 (HTTKPPRPKPPRPAAAPVDAPAAPGDQ). Positions 201–213 (AAPVDAPAAPGDQ) are enriched in low complexity.

The protein belongs to the PTH family. As to quaternary structure, monomer.

It localises to the cytoplasm. The enzyme catalyses an N-acyl-L-alpha-aminoacyl-tRNA + H2O = an N-acyl-L-amino acid + a tRNA + H(+). Its function is as follows. Hydrolyzes ribosome-free peptidyl-tRNAs (with 1 or more amino acids incorporated), which drop off the ribosome during protein synthesis, or as a result of ribosome stalling. Functionally, catalyzes the release of premature peptidyl moieties from peptidyl-tRNA molecules trapped in stalled 50S ribosomal subunits, and thus maintains levels of free tRNAs and 50S ribosomes. The chain is Peptidyl-tRNA hydrolase from Paracidovorax citrulli (strain AAC00-1) (Acidovorax citrulli).